Here is a 532-residue protein sequence, read N- to C-terminus: MTADLGTTADLSTAPATGGLLAADAPSVVQSIDWLAVAPPTLTALAALAVLVADLFLPAHRKRLLGYAALTALAAALALLIPLRAGDRATFCVTTGTRACSYTADHFTLVIQALVLGGALLTVLLSLDDTRKLPAGEYWFLLLASAAGAALLPASRDLATLVVALEVASLPAFALVGIKRGDRRSSEAALKFFLSSVVATAVMLLGVSFVYATTGTLHLTEIATRLDDVPPVLDTLARTGVALTLVGFAFKTAAAPFHFWVPDTYVGAPLPIAAYLSVVGKAVGFSGLILVTVVAFPSYADVWGPALAVLAALTMTAGNVAALRQNAARARSAVRLLAWSSVAQAGYLLVPIAAAAYSSDDQIGSTVAYALMYAVVNLGAFAVAAVVARTHPGNRLTDYRGLYATRPLAALALGFFLLCLAGLPPGIIGLFAKVTVFSAAVDAGLGWLAVVMAVNVVIALYYYLQWTAILFRAPEGAPETTGTATAPTASAPPRRFRAPTPLTTAIVLTATAGILLSGVPQTVLRFASVSLF.

The next 14 membrane-spanning stretches (helical) occupy residues 37-57 (VAPP…DLFL), 63-83 (RLLG…LIPL), 107-127 (FTLV…LLSL), 133-153 (LPAG…ALLP), 158-178 (LATL…LVGI), 192-212 (FFLS…FVYA), 241-261 (VALT…HFWV), 276-296 (LSVV…VVAF), 302-322 (VWGP…NVAA), 336-356 (LLAW…AAAA), 367-387 (VAYA…AAVV), 411-431 (LALG…IGLF), 444-464 (GLGW…YYYL), and 504-524 (TAIV…QTVL).

This sequence belongs to the complex I subunit 2 family. As to quaternary structure, NDH-1 is composed of 14 different subunits. Subunits NuoA, H, J, K, L, M, N constitute the membrane sector of the complex.

It is found in the cell membrane. It carries out the reaction a quinone + NADH + 5 H(+)(in) = a quinol + NAD(+) + 4 H(+)(out). NDH-1 shuttles electrons from NADH, via FMN and iron-sulfur (Fe-S) centers, to quinones in the respiratory chain. The immediate electron acceptor for the enzyme in this species is believed to be a menaquinone. Couples the redox reaction to proton translocation (for every two electrons transferred, four hydrogen ions are translocated across the cytoplasmic membrane), and thus conserves the redox energy in a proton gradient. This is NADH-quinone oxidoreductase subunit N 2 from Streptomyces griseus subsp. griseus (strain JCM 4626 / CBS 651.72 / NBRC 13350 / KCC S-0626 / ISP 5235).